A 490-amino-acid chain; its full sequence is GTPase Der (490 aa).

EngA-type G domains follow at residues 3 to 166 and 203 to 376; these read PVVA…MDDV and IKLA…DSST. Residues 9–16, 56–60, 118–121, 209–216, 256–260, and 321–324 each bind GTP; these read GRPNVGKS, DTGGI, NKTD, DTAGV, and NKWD. One can recognise a KH-like domain in the interval 377–461; the sequence is RRVSTAMLTR…PIRIQFKEGE (85 aa).

It belongs to the TRAFAC class TrmE-Era-EngA-EngB-Septin-like GTPase superfamily. EngA (Der) GTPase family. Associates with the 50S ribosomal subunit.

In terms of biological role, GTPase that plays an essential role in the late steps of ribosome biogenesis. The protein is GTPase Der of Salmonella newport (strain SL254).